A 506-amino-acid polypeptide reads, in one-letter code: Vinckepain-1 (506 aa).

Residues 1-32 are Cytoplasmic-facing; it reads MSDNIGQINFTIPGIQSLDENDTYLKINHKKT. Residues 1-262 constitute a propeptide, activation peptide; sequence MSDNIGQINF…LISVDNKSKD (262 aa). The helical; Signal-anchor for type II membrane protein transmembrane segment at 33-53 threads the bilayer; that stretch reads IKICAYAITAIALFFIGGVFF. Over 54–506 the chain is Lumenal; the sequence is KNQAKINALD…VGSDVFFPIY (453 aa). Asparagine 133 and asparagine 258 each carry an N-linked (GlcNAc...) asparagine glycan. 4 cysteine pairs are disulfide-bonded: cysteine 284–cysteine 326, cysteine 319–cysteine 359, cysteine 344–cysteine 364, and cysteine 413–cysteine 495. Cysteine 287 is an active-site residue. Residue asparagine 418 is glycosylated (N-linked (GlcNAc...) asparagine). Active-site residues include histidine 419 and asparagine 470.

This sequence belongs to the peptidase C1 family.

The protein resides in the membrane. In terms of biological role, cysteine protease. The sequence is that of Vinckepain-1 from Plasmodium vinckei.